The primary structure comprises 240 residues: Pyridoxine 5'-phosphate synthase (240 aa).

A 3-amino-2-oxopropyl phosphate-binding site is contributed by Asn7. Asp9 to His10 contacts 1-deoxy-D-xylulose 5-phosphate. Position 18 (Arg18) interacts with 3-amino-2-oxopropyl phosphate. His43 functions as the Proton acceptor in the catalytic mechanism. 1-deoxy-D-xylulose 5-phosphate-binding residues include Arg45 and His50. Catalysis depends on Glu70, which acts as the Proton acceptor. Thr100 contacts 1-deoxy-D-xylulose 5-phosphate. His191 acts as the Proton donor in catalysis. 3-amino-2-oxopropyl phosphate is bound by residues Gly192 and Gly213–His214.

It belongs to the PNP synthase family. Homooctamer; tetramer of dimers.

The protein resides in the cytoplasm. The enzyme catalyses 3-amino-2-oxopropyl phosphate + 1-deoxy-D-xylulose 5-phosphate = pyridoxine 5'-phosphate + phosphate + 2 H2O + H(+). It participates in cofactor biosynthesis; pyridoxine 5'-phosphate biosynthesis; pyridoxine 5'-phosphate from D-erythrose 4-phosphate: step 5/5. In terms of biological role, catalyzes the complicated ring closure reaction between the two acyclic compounds 1-deoxy-D-xylulose-5-phosphate (DXP) and 3-amino-2-oxopropyl phosphate (1-amino-acetone-3-phosphate or AAP) to form pyridoxine 5'-phosphate (PNP) and inorganic phosphate. The protein is Pyridoxine 5'-phosphate synthase of Synechococcus elongatus (strain ATCC 33912 / PCC 7942 / FACHB-805) (Anacystis nidulans R2).